The following is a 248-amino-acid chain: tRNA1(Val) (adenine(37)-N6)-methyltransferase (248 aa).

The protein belongs to the methyltransferase superfamily. tRNA (adenine-N(6)-)-methyltransferase family.

Its subcellular location is the cytoplasm. The enzyme catalyses adenosine(37) in tRNA1(Val) + S-adenosyl-L-methionine = N(6)-methyladenosine(37) in tRNA1(Val) + S-adenosyl-L-homocysteine + H(+). Specifically methylates the adenine in position 37 of tRNA(1)(Val) (anticodon cmo5UAC). The chain is tRNA1(Val) (adenine(37)-N6)-methyltransferase from Musicola paradisiaca (strain Ech703) (Dickeya paradisiaca).